Here is a 341-residue protein sequence, read N- to C-terminus: MATIKDVAKRAGVSTTTVSHVINKTRFVADETREAVWVAIKELHYSPSAVARSLKVNHTKTIGLLATSSEAPYFAEIIEAVENSCFAKGYTLILGNAHNNIEKQQAYLSMMAQKRVDGLLVMCSEYPDALISMLEDHRNIPMVVMDWGKSRGDFTDTVLDNAFEGGYLAGRYLIERGHRDIAAIPGQLERNTGGGRHAGFLKALTEAGIVLREEWLVQGDFEPESGYRAMQQILAQKQRPTAVFCGGDIMAMGAICAADEMGLRVPQDISVIGYDNVRNARYFTPALTTVHQPKERLGETAFNMLLDRITSKREESQTIEVYPTLIERRSVADGPYRDYRR.

The HTH lacI-type domain maps to 2-56 (ATIKDVAKRAGVSTTTVSHVINKTRFVADETREAVWVAIKELHYSPSAVARSLKV). Residues 4–23 (IKDVAKRAGVSTTTVSHVIN) constitute a DNA-binding region (H-T-H motif). Residues 48–56 (SAVARSLKV) mediate DNA binding. Hypoxanthine-binding residues include Tyr-73, Arg-190, Thr-192, Phe-221, and Asp-275.

Homodimer.

It participates in purine metabolism; purine nucleotide biosynthesis [regulation]. Is the main repressor of the genes involved in the de novo synthesis of purine nucleotides, regulating purB, purC, purEK, purF, purHD, purL, purMN and guaBA expression. PurR is allosterically activated to bind its cognate DNA by binding the purine corepressors, hypoxanthine or guanine, thereby effecting transcription repression. The polypeptide is HTH-type transcriptional repressor PurR (Erwinia tasmaniensis (strain DSM 17950 / CFBP 7177 / CIP 109463 / NCPPB 4357 / Et1/99)).